We begin with the raw amino-acid sequence, 349 residues long: Anthranilate phosphoribosyltransferase (349 aa).

Residues Gly82, 85 to 86, 92 to 95, 110 to 118, and Ser122 each bind 5-phospho-alpha-D-ribose 1-diphosphate; these read GD, NVST, and KHGNRAVSG. Position 82 (Gly82) interacts with anthranilate. Mg(2+) is bound at residue Ser94. Asn113 is a binding site for anthranilate. Arg168 lines the anthranilate pocket. Asp227 and Glu228 together coordinate Mg(2+).

This sequence belongs to the anthranilate phosphoribosyltransferase family. In terms of assembly, homodimer. Requires Mg(2+) as cofactor.

It carries out the reaction N-(5-phospho-beta-D-ribosyl)anthranilate + diphosphate = 5-phospho-alpha-D-ribose 1-diphosphate + anthranilate. It participates in amino-acid biosynthesis; L-tryptophan biosynthesis; L-tryptophan from chorismate: step 2/5. Its function is as follows. Catalyzes the transfer of the phosphoribosyl group of 5-phosphorylribose-1-pyrophosphate (PRPP) to anthranilate to yield N-(5'-phosphoribosyl)-anthranilate (PRA). The sequence is that of Anthranilate phosphoribosyltransferase from Pseudomonas fluorescens (strain SBW25).